The following is a 184-amino-acid chain: Large ribosomal subunit protein uL6 (184 aa).

The protein belongs to the universal ribosomal protein uL6 family. As to quaternary structure, part of the 50S ribosomal subunit.

This protein binds to the 23S rRNA, and is important in its secondary structure. It is located near the subunit interface in the base of the L7/L12 stalk, and near the tRNA binding site of the peptidyltransferase center. This Desulfitobacterium hafniense (strain Y51) protein is Large ribosomal subunit protein uL6.